Consider the following 179-residue polypeptide: Large ribosomal subunit protein uL5 (179 aa).

The protein belongs to the universal ribosomal protein uL5 family. Part of the 50S ribosomal subunit; part of the 5S rRNA/L5/L18/L25 subcomplex. Contacts the 5S rRNA and the P site tRNA. Forms a bridge to the 30S subunit in the 70S ribosome.

Its function is as follows. This is one of the proteins that bind and probably mediate the attachment of the 5S RNA into the large ribosomal subunit, where it forms part of the central protuberance. In the 70S ribosome it contacts protein S13 of the 30S subunit (bridge B1b), connecting the 2 subunits; this bridge is implicated in subunit movement. Contacts the P site tRNA; the 5S rRNA and some of its associated proteins might help stabilize positioning of ribosome-bound tRNAs. In Lachnoclostridium phytofermentans (strain ATCC 700394 / DSM 18823 / ISDg) (Clostridium phytofermentans), this protein is Large ribosomal subunit protein uL5.